The sequence spans 785 residues: 1-phosphatidylinositol 4,5-bisphosphate phosphodiesterase delta-3 (785 aa).

A disordered region spans residues 1–43; the sequence is MLCGGWKRSRRSPEESRVSAQVAAPLAFPPSPASSDSSTKRPG. In terms of domain architecture, PH spans 65-168; it reads SRLLKIRSRT…WVRGLAKLRA (104 aa). A substrate binding region spans residues 69-97; it reads KIRSRTWHKERLYRLQEDGLSVWFQRRIP. At S101 the chain carries Phosphoserine. EF-hand domains follow at residues 178–213, 214–249, and 246–281; these read RLDH…VNVD, MNDM…LLKR, and LLKR…QGED. The Ca(2+) site is built by D191, D193, D195, K197, E202, D227, S229, N231, R233, and E238. Positions 333 to 478 constitute a PI-PLC X-box domain; the sequence is QDMGQPLAHY…LKGRILVKGK (146 aa). Residue H348 is part of the active site. Residues N349, E378, and D380 each contribute to the Ca(2+) site. H393 is a catalytic residue. E427 contributes to the Ca(2+) binding site. K476 and K478 together coordinate substrate. A compositionally biased stretch (basic and acidic residues) spans 484–493; the sequence is RSEDGRILSD. Positions 484-517 are disordered; sequence RSEDGRILSDREEEEEEEEEAEEALEAAEQRSRA. S492 bears the Phosphoserine mark. Residues 494–509 are compositionally biased toward acidic residues; sequence REEEEEEEEEAEEALE. The PI-PLC Y-box domain occupies 524–640; that stretch reads LSALAVYCCA…GYVLKPAYLR (117 aa). Position 553 (S553) interacts with substrate. Residue S569 is modified to Phosphoserine. R580 provides a ligand contact to substrate. One can recognise a C2 domain in the interval 636–765; the sequence is PAYLRQLNTT…QGYRHIHLLS (130 aa). Residues I679, D681, N705, D734, Y735, and D736 each contribute to the Ca(2+) site.

Ca(2+) is required as a cofactor. As to expression, expressed in cerebellum and cerebral cortex.

The protein resides in the membrane. It is found in the cytoplasm. The protein localises to the cleavage furrow. It catalyses the reaction a 1,2-diacyl-sn-glycero-3-phospho-(1D-myo-inositol-4,5-bisphosphate) + H2O = 1D-myo-inositol 1,4,5-trisphosphate + a 1,2-diacyl-sn-glycerol + H(+). Its activity is regulated as follows. Strongly activated by phosphatidic acid. Inhibited by phosphatidylethanolamine (PtdEtn), phosphatidylcholine (PtdCho), sphingomyelin and phosphatidylserine (PtdSer). Its function is as follows. Hydrolyzes the phosphatidylinositol 4,5-bisphosphate (PIP2) to generate 2 second messenger molecules diacylglycerol (DAG) and inositol 1,4,5-trisphosphate (IP3). DAG mediates the activation of protein kinase C (PKC), while IP3 releases Ca(2+) from intracellular stores. Essential for trophoblast and placental development. May participate in cytokinesis by hydrolyzing PIP2 at the cleavage furrow. Regulates neurite outgrowth through the inhibition of RhoA/Rho kinase signaling. The polypeptide is 1-phosphatidylinositol 4,5-bisphosphate phosphodiesterase delta-3 (Mus musculus (Mouse)).